A 291-amino-acid chain; its full sequence is ATP synthase gamma chain (291 aa).

Belongs to the ATPase gamma chain family. In terms of assembly, F-type ATPases have 2 components, CF(1) - the catalytic core - and CF(0) - the membrane proton channel. CF(1) has five subunits: alpha(3), beta(3), gamma(1), delta(1), epsilon(1). CF(0) has three main subunits: a, b and c.

The protein localises to the cell inner membrane. Its function is as follows. Produces ATP from ADP in the presence of a proton gradient across the membrane. The gamma chain is believed to be important in regulating ATPase activity and the flow of protons through the CF(0) complex. This is ATP synthase gamma chain from Burkholderia ambifaria (strain MC40-6).